The primary structure comprises 197 residues: MIASVRGVVQLIGQDQVVIDVHGVGLAIAVPRTVLATIGAIGDTAQLYTHLHVREDMLALFGFSSPAQRALFELLLGVSGIGPKVALALLSAATPEELQHAIAREDITMLSKVPGIGKKTAARLVLELKGKFGVATISPQLSTNPGLLALNTELIDILTSLGYSTTEAQAALNALPADAPADTEERLRLALQYFGGV.

A domain I region spans residues 1–64 (MIASVRGVVQ…EDMLALFGFS (64 aa)). The interval 65-143 (SPAQRALFEL…VATISPQLST (79 aa)) is domain II. The segment at 144–153 (NPGLLALNTE) is flexible linker. The segment at 153–197 (ELIDILTSLGYSTTEAQAALNALPADAPADTEERLRLALQYFGGV) is domain III.

The protein belongs to the RuvA family. As to quaternary structure, homotetramer. Forms an RuvA(8)-RuvB(12)-Holliday junction (HJ) complex. HJ DNA is sandwiched between 2 RuvA tetramers; dsDNA enters through RuvA and exits via RuvB. An RuvB hexamer assembles on each DNA strand where it exits the tetramer. Each RuvB hexamer is contacted by two RuvA subunits (via domain III) on 2 adjacent RuvB subunits; this complex drives branch migration. In the full resolvosome a probable DNA-RuvA(4)-RuvB(12)-RuvC(2) complex forms which resolves the HJ.

The protein resides in the cytoplasm. Functionally, the RuvA-RuvB-RuvC complex processes Holliday junction (HJ) DNA during genetic recombination and DNA repair, while the RuvA-RuvB complex plays an important role in the rescue of blocked DNA replication forks via replication fork reversal (RFR). RuvA specifically binds to HJ cruciform DNA, conferring on it an open structure. The RuvB hexamer acts as an ATP-dependent pump, pulling dsDNA into and through the RuvAB complex. HJ branch migration allows RuvC to scan DNA until it finds its consensus sequence, where it cleaves and resolves the cruciform DNA. This is Holliday junction branch migration complex subunit RuvA from Herpetosiphon aurantiacus (strain ATCC 23779 / DSM 785 / 114-95).